Here is a 454-residue protein sequence, read N- to C-terminus: Ribosomal protein uS12 methylthiotransferase RimO (454 aa).

The MTTase N-terminal domain occupies 14–125 (SKVAFSHVGC…IAKVLDRVEQ (112 aa)). Positions 23, 59, 88, 163, 167, and 170 each coordinate [4Fe-4S] cluster. Residues 149 to 378 (DKNKFVAYLR…ISVQQNISKD (230 aa)) enclose the Radical SAM core domain. The 72-residue stretch at 381–452 (QTYVGSKMKI…EYDLYGEIIK (72 aa)) folds into the TRAM domain.

Belongs to the methylthiotransferase family. RimO subfamily. [4Fe-4S] cluster serves as cofactor.

The protein localises to the cytoplasm. The catalysed reaction is L-aspartate(89)-[ribosomal protein uS12]-hydrogen + (sulfur carrier)-SH + AH2 + 2 S-adenosyl-L-methionine = 3-methylsulfanyl-L-aspartate(89)-[ribosomal protein uS12]-hydrogen + (sulfur carrier)-H + 5'-deoxyadenosine + L-methionine + A + S-adenosyl-L-homocysteine + 2 H(+). In terms of biological role, catalyzes the methylthiolation of an aspartic acid residue of ribosomal protein uS12. The sequence is that of Ribosomal protein uS12 methylthiotransferase RimO from Prochlorococcus marinus (strain AS9601).